The chain runs to 326 residues: Aldo-keto reductase family 1 member D1 (326 aa).

NADP(+) is bound by residues 22-26 (GLGTY) and D53. Y26 provides a ligand contact to substrate. Positions 58, 89, 120, and 132 each coordinate substrate. The active-site Proton donor is the Y58. NADP(+) contacts are provided by residues 169 to 170 (SN), Q193, and 219 to 224 (YSPLGT). W230 contacts substrate. 273-283 (KSFNPERIKEN) lines the NADP(+) pocket.

Belongs to the aldo/keto reductase family.

The protein localises to the cytoplasm. It catalyses the reaction 5beta-cholestan-3-one + NADP(+) = cholest-4-en-3-one + NADPH + H(+). The catalysed reaction is 4,5beta-dihydrocortisone + NADP(+) = cortisone + NADPH + H(+). The enzyme catalyses cortisol + NADPH + H(+) = 5beta-dihydrocortisol + NADP(+). It carries out the reaction corticosterone + NADPH + H(+) = 5beta-dihydrocorticosterone + NADP(+). It catalyses the reaction 7alpha,12alpha-dihydroxycholest-4-en-3-one + NADPH + H(+) = 7alpha,12alpha-dihydroxy-5beta-cholestan-3-one + NADP(+). The catalysed reaction is 7alpha-hydroxycholest-4-en-3-one + NADPH + H(+) = 7alpha-hydroxy-5beta-cholestan-3-one + NADP(+). The enzyme catalyses epitestosterone + NADPH + H(+) = 5beta-dihydroepitestosterone + NADP(+). It carries out the reaction androst-4-ene-3,17-dione + NADPH + H(+) = 5beta-androstane-3,17-dione + NADP(+). It catalyses the reaction progesterone + NADPH + H(+) = 5beta-pregnan-3,20-dione + NADP(+). The catalysed reaction is 21-hydroxyprogesterone + NADPH + H(+) = 5beta-dihydrodeoxycorticosterone + NADP(+). The enzyme catalyses aldosterone + NADPH + H(+) = 5beta-dihydroaldosterone + NADP(+). It carries out the reaction 17beta-hydroxyandrosta-1,4-dien-3-one + NADPH + H(+) = 17beta-hydroxy-5beta-androst-1-en-3-one + NADP(+). It catalyses the reaction 17beta-hydroxyestr-4-en-3-one + NADPH + H(+) = 17beta-hydroxy-5beta-estran-3-one + NADP(+). The catalysed reaction is 5beta-dihydrotestosterone + NADP(+) = testosterone + NADPH + H(+). The enzyme catalyses androst-4-ene-3,11,17-trione + NADPH + H(+) = 17beta-hydroxyandrost-4-ene-3,11-dione + NADP(+). Subject to inhibition by high substrate concentrations. Inhibited by testosterone concentrations above 10 uM. Inhibited by the primary and secondary bile acids chenodeoxycholic acid and ursodeoxycholic acid. Functionally, catalyzes the stereospecific NADPH-dependent reduction of the C4-C5 double bond of bile acid intermediates and steroid hormones carrying a delta(4)-3-one structure to yield an A/B cis-ring junction. This cis-configuration is crucial for bile acid biosynthesis and plays important roles in steroid metabolism. Capable of reducing a broad range of delta-(4)-3-ketosteroids from C18 (such as, 17beta-hydroxyestr-4-en-3-one) to C27 (such as, 7alpha-hydroxycholest-4-en-3-one). The protein is Aldo-keto reductase family 1 member D1 (AKR1D1) of Oryctolagus cuniculus (Rabbit).